We begin with the raw amino-acid sequence, 81 residues long: ATP synthase subunit c, chloroplastic (81 aa).

Helical transmembrane passes span 3-23 (PIIS…ASIG) and 57-77 (LAFM…LLFA).

The protein belongs to the ATPase C chain family. As to quaternary structure, F-type ATPases have 2 components, F(1) - the catalytic core - and F(0) - the membrane proton channel. F(1) has five subunits: alpha(3), beta(3), gamma(1), delta(1), epsilon(1). F(0) has four main subunits: a(1), b(1), b'(1) and c(10-14). The alpha and beta chains form an alternating ring which encloses part of the gamma chain. F(1) is attached to F(0) by a central stalk formed by the gamma and epsilon chains, while a peripheral stalk is formed by the delta, b and b' chains.

The protein localises to the plastid. Its subcellular location is the chloroplast thylakoid membrane. In terms of biological role, f(1)F(0) ATP synthase produces ATP from ADP in the presence of a proton or sodium gradient. F-type ATPases consist of two structural domains, F(1) containing the extramembraneous catalytic core and F(0) containing the membrane proton channel, linked together by a central stalk and a peripheral stalk. During catalysis, ATP synthesis in the catalytic domain of F(1) is coupled via a rotary mechanism of the central stalk subunits to proton translocation. Functionally, key component of the F(0) channel; it plays a direct role in translocation across the membrane. A homomeric c-ring of between 10-14 subunits forms the central stalk rotor element with the F(1) delta and epsilon subunits. This chain is ATP synthase subunit c, chloroplastic, found in Cicer arietinum (Chickpea).